The sequence spans 313 residues: Tyrosine recombinase slr0733 (313 aa).

The 95-residue stretch at 7–101 (NNLSGLNQNI…AIKSLVNYAR (95 aa)) folds into the Core-binding (CB) domain. The Tyr recombinase domain occupies 122 to 307 (RDTTGVSPTS…RHQHQAQITD (186 aa)). Catalysis depends on residues arginine 162, lysine 188, histidine 258, arginine 261, and histidine 285. Tyrosine 294 serves as the catalytic O-(3'-phospho-DNA)-tyrosine intermediate.

It belongs to the 'phage' integrase family.

The protein localises to the cytoplasm. Functionally, site-specific tyrosine recombinase, which acts by catalyzing the cutting and rejoining of the recombining DNA molecules. This chain is Tyrosine recombinase slr0733, found in Synechocystis sp. (strain ATCC 27184 / PCC 6803 / Kazusa).